The following is a 283-amino-acid chain: 4-diphosphocytidyl-2-C-methyl-D-erythritol kinase (283 aa).

Residue K10 is part of the active site. 99–109 serves as a coordination point for ATP; that stretch reads PMGGGLGGGSS. The active site involves D141.

The protein belongs to the GHMP kinase family. IspE subfamily. Homodimer.

The catalysed reaction is 4-CDP-2-C-methyl-D-erythritol + ATP = 4-CDP-2-C-methyl-D-erythritol 2-phosphate + ADP + H(+). The protein operates within isoprenoid biosynthesis; isopentenyl diphosphate biosynthesis via DXP pathway; isopentenyl diphosphate from 1-deoxy-D-xylulose 5-phosphate: step 3/6. Functionally, catalyzes the phosphorylation of the position 2 hydroxy group of 4-diphosphocytidyl-2C-methyl-D-erythritol. The sequence is that of 4-diphosphocytidyl-2-C-methyl-D-erythritol kinase from Escherichia coli (strain 55989 / EAEC).